We begin with the raw amino-acid sequence, 152 residues long: Deoxyuridine 5'-triphosphate nucleotidohydrolase (152 aa).

Residues 71–73, Asn84, 88–90, and Met98 contribute to the substrate site; these read RSG and LID.

It belongs to the dUTPase family. Mg(2+) is required as a cofactor.

It catalyses the reaction dUTP + H2O = dUMP + diphosphate + H(+). Its pathway is pyrimidine metabolism; dUMP biosynthesis; dUMP from dCTP (dUTP route): step 2/2. Functionally, this enzyme is involved in nucleotide metabolism: it produces dUMP, the immediate precursor of thymidine nucleotides and it decreases the intracellular concentration of dUTP so that uracil cannot be incorporated into DNA. The polypeptide is Deoxyuridine 5'-triphosphate nucleotidohydrolase (Aeromonas hydrophila subsp. hydrophila (strain ATCC 7966 / DSM 30187 / BCRC 13018 / CCUG 14551 / JCM 1027 / KCTC 2358 / NCIMB 9240 / NCTC 8049)).